The sequence spans 202 residues: FMN-dependent NADH:quinone oxidoreductase 1 (202 aa).

FMN is bound by residues Ser9, 15–17, 95–98, and 139–142; these read SAS, MYNF, and TSGG.

The protein belongs to the azoreductase type 1 family. In terms of assembly, homodimer. FMN is required as a cofactor.

The catalysed reaction is 2 a quinone + NADH + H(+) = 2 a 1,4-benzosemiquinone + NAD(+). It catalyses the reaction N,N-dimethyl-1,4-phenylenediamine + anthranilate + 2 NAD(+) = 2-(4-dimethylaminophenyl)diazenylbenzoate + 2 NADH + 2 H(+). Its function is as follows. Quinone reductase that provides resistance to thiol-specific stress caused by electrophilic quinones. Also exhibits azoreductase activity. Catalyzes the reductive cleavage of the azo bond in aromatic azo compounds to the corresponding amines. The polypeptide is FMN-dependent NADH:quinone oxidoreductase 1 (Pseudomonas syringae pv. tomato (strain ATCC BAA-871 / DC3000)).